Consider the following 316-residue polypeptide: Holliday junction branch migration complex subunit RuvB (316 aa).

The segment at 1 to 165 (MQITRPHNFE…FGYIARFVSY (165 aa)) is large ATPase domain (RuvB-L). ATP contacts are provided by residues Arg5, Gly46, Lys49, Thr50, Ser51, 112–114 (EDF), Arg155, Tyr165, and Arg202. Thr50 contacts Mg(2+). The small ATPAse domain (RuvB-S) stretch occupies residues 166-236 (NAEDMKQIIR…IIKKTFKSLD (71 aa)). Positions 239–316 (EYGLTKDHVE…TYLLKEKLIW (78 aa)) are head domain (RuvB-H). DNA contacts are provided by Lys294 and Arg299.

This sequence belongs to the RuvB family. Homohexamer. Forms an RuvA(8)-RuvB(12)-Holliday junction (HJ) complex. HJ DNA is sandwiched between 2 RuvA tetramers; dsDNA enters through RuvA and exits via RuvB. An RuvB hexamer assembles on each DNA strand where it exits the tetramer. Each RuvB hexamer is contacted by two RuvA subunits (via domain III) on 2 adjacent RuvB subunits; this complex drives branch migration. In the full resolvosome a probable DNA-RuvA(4)-RuvB(12)-RuvC(2) complex forms which resolves the HJ.

It localises to the cytoplasm. The catalysed reaction is ATP + H2O = ADP + phosphate + H(+). In terms of biological role, the RuvA-RuvB-RuvC complex processes Holliday junction (HJ) DNA during genetic recombination and DNA repair, while the RuvA-RuvB complex plays an important role in the rescue of blocked DNA replication forks via replication fork reversal (RFR). RuvA specifically binds to HJ cruciform DNA, conferring on it an open structure. The RuvB hexamer acts as an ATP-dependent pump, pulling dsDNA into and through the RuvAB complex. RuvB forms 2 homohexamers on either side of HJ DNA bound by 1 or 2 RuvA tetramers; 4 subunits per hexamer contact DNA at a time. Coordinated motions by a converter formed by DNA-disengaged RuvB subunits stimulates ATP hydrolysis and nucleotide exchange. Immobilization of the converter enables RuvB to convert the ATP-contained energy into a lever motion, pulling 2 nucleotides of DNA out of the RuvA tetramer per ATP hydrolyzed, thus driving DNA branch migration. The RuvB motors rotate together with the DNA substrate, which together with the progressing nucleotide cycle form the mechanistic basis for DNA recombination by continuous HJ branch migration. Branch migration allows RuvC to scan DNA until it finds its consensus sequence, where it cleaves and resolves cruciform DNA. In Mycoplasmopsis synoviae (strain 53) (Mycoplasma synoviae), this protein is Holliday junction branch migration complex subunit RuvB.